Consider the following 336-residue polypeptide: Ribose-phosphate pyrophosphokinase (336 aa).

ATP is bound by residues 43 to 45 (DQE) and 102 to 103 (RQ). 2 residues coordinate Mg(2+): His-136 and Asp-178. Residue Lys-201 is part of the active site. D-ribose 5-phosphate is bound by residues Arg-203, Asp-227, and 231–235 (DTAGT).

The protein belongs to the ribose-phosphate pyrophosphokinase family. Class I subfamily. Homohexamer. The cofactor is Mg(2+).

The protein resides in the cytoplasm. It carries out the reaction D-ribose 5-phosphate + ATP = 5-phospho-alpha-D-ribose 1-diphosphate + AMP + H(+). It functions in the pathway metabolic intermediate biosynthesis; 5-phospho-alpha-D-ribose 1-diphosphate biosynthesis; 5-phospho-alpha-D-ribose 1-diphosphate from D-ribose 5-phosphate (route I): step 1/1. Its function is as follows. Involved in the biosynthesis of the central metabolite phospho-alpha-D-ribosyl-1-pyrophosphate (PRPP) via the transfer of pyrophosphoryl group from ATP to 1-hydroxyl of ribose-5-phosphate (Rib-5-P). The polypeptide is Ribose-phosphate pyrophosphokinase (Cereibacter sphaeroides (strain KD131 / KCTC 12085) (Rhodobacter sphaeroides)).